Consider the following 177-residue polypeptide: Mitochondrial inner membrane protease subunit 2 (177 aa).

The chain crosses the membrane as a helical span at residues 19 to 37; that stretch reads FFVAVPVAVTFLDRVACVA. Active-site residues include Ser-43 and Lys-91.

It belongs to the peptidase S26 family. IMP2 subfamily. In terms of assembly, heterodimer of 2 subunits, IMMPL1 and IMMPL2.

The protein resides in the mitochondrion inner membrane. Catalyzes the removal of transit peptides required for the targeting of proteins from the mitochondrial matrix, across the inner membrane, into the inter-membrane space. Known to process the nuclear encoded protein DIABLO. The chain is Mitochondrial inner membrane protease subunit 2 (IMMP2L) from Bos taurus (Bovine).